Reading from the N-terminus, the 784-residue chain is Toll-like receptor 2 (784 aa).

An N-terminal signal peptide occupies residues 1 to 20 (MPHALWTVWVLGAVISLSKE). At 21-587 (GVPDQPSSLS…THLSVSECHR (567 aa)) the chain is on the extracellular side. Cysteines 31 and 37 form a disulfide. LRR repeat units lie at residues 54–77 (AVKSLDLSNNKIASVGNSDLWKCV), 78–101 (NLKALRLGSNDINTIEEDSFSSLR), 102–125 (SLEHLDLSNNHLSNLSSSWFRPLS), 126–150 (SLKFLNLLGSTYKTLGETSLFSHLT), 151–175 (NLRILKVGNIHFTEIQGKDFAGLTF), 176–199 (LEELEIDATNLQRYEPKSFKSIQN), 200–223 (ISHLILRMKQPVLLPEIILDTLSS), 224–250 (LEYLELRDTYLNTFHFAEVSDPETNTL), 251–278 (IKKFTFRNVKITDESFDEIVKLLNYISG), 279–308 (VSEAEFDECTLDGLGEFRTPDIDKIKVIGK), 309–337 (LETLTIRRLRIPQFYLFRDLSSIYSLTER), 338–361 (VKRITIENSKVFLVPCSLSRHLKS), 362–388 (LEYLDLSDNLMVEEYLKNSACERAWPS), 389–414 (LQTLILRQNHLTSLGKTGETLLTLKN), 415–437 (LTKLDISKNSFHSMPETCQWPEK), 438–457 (MKYLNLSSIRIDRLTQCIPQ), 458–478 (TLEVLDISNNNLNSFSLILPQ), 479–500 (VKELYISRNKLKTLPDASFLPM), and 501–524 (LLVMRISRKTINTFSKEQLDSFQK). A glycan (N-linked (GlcNAc...) asparagine) is linked at N115. Residue N199 is glycosylated (N-linked (GlcNAc...) asparagine). C353 and C382 are oxidised to a cystine. N414 is a glycosylation site (N-linked (GlcNAc...) asparagine). A disulfide bridge links C432 with C454. N-linked (GlcNAc...) asparagine glycosylation occurs at N442. Residues 525 to 579 (LKTLEAGGNNFICSCEFLSFTQEEQALDQILIDWPENYLCDSPSHVRGQRVQDTH) form the LRRCT domain. The chain crosses the membrane as a helical span at residues 588–608 (TALVSAVCCALFLSILLTGVL). Residues 609–784 (CHHFHGLWYM…WLNLRAAIKS (176 aa)) are Cytoplasmic-facing. Positions 639–782 (ICYDAFVSYS…GFWLNLRAAI (144 aa)) constitute a TIR domain. K754 is covalently cross-linked (Glycyl lysine isopeptide (Lys-Gly) (interchain with G-Cter in ubiquitin)). The ATG16L1-binding motif motif lies at 761 to 778 (YLEWPTDEAQQEGFWLNL).

Belongs to the Toll-like receptor family. In terms of assembly, interacts with LY96, TLR1 and TLR6 (via extracellular domain). TLR2 seems to exist in heterodimers with either TLR1 or TLR6 before stimulation by the ligand. The heterodimers form bigger oligomers in response to their corresponding ligands as well as further heterotypic associations with other receptors such as CD14 and/or CD36. Binds MYD88 (via TIR domain). Interacts with TICAM1. Interacts with CNPY3. Interacts with ATG16L1. Interacts with PPP1R11. Interacts with TICAM2. Interacts with TIRAP. In terms of processing, ubiquitinated at Lys-754 by PPP1R11, leading to its degradation. Deubiquitinated by USP2. Glycosylation of Asn-442 is critical for secretion of the N-terminal ectodomain of TLR2.

The protein resides in the membrane. It is found in the cytoplasmic vesicle. The protein localises to the phagosome membrane. It localises to the membrane raft. Functionally, cooperates with LY96 to mediate the innate immune response to bacterial lipoproteins and other microbial cell wall components. Cooperates with TLR1 or TLR6 to mediate the innate immune response to bacterial lipoproteins or lipopeptides. Acts via MYD88 and TRAF6, leading to NF-kappa-B activation, cytokine secretion and the inflammatory response. May also promote apoptosis in response to lipoproteins. Forms activation clusters composed of several receptors depending on the ligand, these clusters trigger signaling from the cell surface and subsequently are targeted to the Golgi in a lipid-raft dependent pathway. Forms the cluster TLR2:TLR6:CD14:CD36 in response to diacylated lipopeptides and TLR2:TLR1:CD14 in response to triacylated lipopeptides. In Equus caballus (Horse), this protein is Toll-like receptor 2 (TLR2).